The chain runs to 436 residues: Prenyltransferase nscD (436 aa).

It belongs to the tryptophan dimethylallyltransferase family.

The protein operates within secondary metabolite biosynthesis. In terms of biological role, prenyltransferase; part of the gene cluster that mediates the biosynthesis of neosartoricin B, a prenylated anthracenone that probably exhibits T-cell antiproliferative activity, suggestive of a physiological role as an immunosuppressive agent. The non-reducing polyketide synthase nscA probably synthesizes and cyclizes the decaketide backbone. The hydrolase nscB then mediates the product release through hydrolysis followed by spontaneous decarboxylation. The prenyltransferase nscD catalyzes the addition of the dimethylallyl group to the aromatic C5. The FAD-dependent monooxygenase nscC is then responsible for the stereospecific hydroxylation at C2. Neosartoricin B can be converted into two additional compounds neosartoricins C and D. Neosartoricin C is a spirocyclic compound that is cyclized through the attack of C3 hydroxyl on C14, followed by dehydration. On the other hand, neosartoricin D is a further cyclized compound in which attack of C2 on C14 in neosartoricin C results in the formation of the acetal-containing dioxabicyclo-octanone ring. Both of these compounds are novel and possibly represent related metabolites of the gene cluster. This Arthroderma benhamiae (strain ATCC MYA-4681 / CBS 112371) (Trichophyton mentagrophytes) protein is Prenyltransferase nscD.